Consider the following 140-residue polypeptide: Small ribosomal subunit protein uS19 (140 aa).

Residues 55–74 (LAEARESGTEETANNPIRTH) form a disordered region.

This sequence belongs to the universal ribosomal protein uS19 family.

Functionally, protein S19 forms a complex with S13 that binds strongly to the 16S ribosomal RNA. In Halobacterium salinarum (strain ATCC 29341 / DSM 671 / R1), this protein is Small ribosomal subunit protein uS19.